Here is a 259-residue protein sequence, read N- to C-terminus: Phosphate import ATP-binding protein PstB 1 (259 aa).

Positions isoleucine 13–isoleucine 254 constitute an ABC transporter domain. Glycine 45–serine 52 provides a ligand contact to ATP.

This sequence belongs to the ABC transporter superfamily. Phosphate importer (TC 3.A.1.7) family. As to quaternary structure, the complex is composed of two ATP-binding proteins (PstB), two transmembrane proteins (PstC and PstA) and a solute-binding protein (PstS).

It is found in the cell membrane. The catalysed reaction is phosphate(out) + ATP + H2O = ADP + 2 phosphate(in) + H(+). Functionally, part of the ABC transporter complex PstSACB involved in phosphate import. Responsible for energy coupling to the transport system. In Listeria innocua serovar 6a (strain ATCC BAA-680 / CLIP 11262), this protein is Phosphate import ATP-binding protein PstB 1.